Consider the following 408-residue polypeptide: Menaquinone reductase (408 aa).

Residues 13-17 (GAGPA), 46-49 (CGDG), Arg103, Ala127, Asp290, and 302-303 (GI) each bind FAD.

It belongs to the geranylgeranyl reductase family. The cofactor is FAD.

The catalysed reaction is menaquinone-9 + AH2 = beta-dihydromenaquinone-9 + A. It functions in the pathway quinol/quinone metabolism; menaquinone biosynthesis. Functionally, catalyzes the reduction of a single double bond in the isoprenoid tail of menaquinone (MK-9) in M.tuberculosis, likely the beta-isoprene unit, forming the predominant form of menaquinone found in mycobacteria, MK-9(II-H2). The chain is Menaquinone reductase from Mycobacterium tuberculosis (strain CDC 1551 / Oshkosh).